The primary structure comprises 113 residues: Propane 2-monooxygenase, effector component (113 aa).

The protein belongs to the TmoD/XamoD family. The propane 2-monooxygenase multicomponent enzyme system is composed of an electron transfer component and a monooxygenase component interacting with the effector protein PrmD. The electron transfer component is composed of a reductase (PrmB), and the monooxygenase component is formed by a large subunit (PrmA) and a small subunit (PrmC).

Effector component of the propane 2-monooxygenase multicomponent enzyme system which is involved in the degradation of propane via the O2-dependent hydroxylation of propane. The protein is Propane 2-monooxygenase, effector component of Rhodococcus jostii (strain RHA1).